Here is a 189-residue protein sequence, read N- to C-terminus: Probable nicotinate-nucleotide adenylyltransferase (189 aa).

Belongs to the NadD family.

The enzyme catalyses nicotinate beta-D-ribonucleotide + ATP + H(+) = deamido-NAD(+) + diphosphate. It functions in the pathway cofactor biosynthesis; NAD(+) biosynthesis; deamido-NAD(+) from nicotinate D-ribonucleotide: step 1/1. In terms of biological role, catalyzes the reversible adenylation of nicotinate mononucleotide (NaMN) to nicotinic acid adenine dinucleotide (NaAD). The chain is Probable nicotinate-nucleotide adenylyltransferase from Staphylococcus aureus (strain MRSA252).